The chain runs to 91 residues: Putative defensin-like protein 83 (91 aa).

An N-terminal signal peptide occupies residues 1 to 27; sequence MATNKFLSILLLSLMAFAAILLPMISG. Intrachain disulfides connect Cys-32-Cys-71, Cys-37-Cys-57, Cys-43-Cys-69, and Cys-47-Cys-70.

The protein belongs to the DEFL family.

Its subcellular location is the secreted. The chain is Putative defensin-like protein 83 (LCR46) from Arabidopsis thaliana (Mouse-ear cress).